Here is a 167-residue protein sequence, read N- to C-terminus: Photosystem I assembly protein Ycf3 (167 aa).

TPR repeat units lie at residues 35-68 (AFSY…EEDP), 72-105 (SFIL…NNKL), and 120-153 (AVKA…APSN).

This sequence belongs to the Ycf3 family.

It is found in the plastid. The protein resides in the chloroplast thylakoid membrane. In terms of biological role, essential for the assembly of the photosystem I (PSI) complex. May act as a chaperone-like factor to guide the assembly of the PSI subunits. The polypeptide is Photosystem I assembly protein Ycf3 (Galdieria sulphuraria (Red alga)).